The primary structure comprises 387 residues: Thermostable celloxylanase (387 aa).

One can recognise a GH10 domain in the interval 41–382 (AEDIPSLAEA…KPAFWAIVDP (342 aa)). The active-site Proton donor is the E185. E293 (nucleophile) is an active-site residue.

Belongs to the glycosyl hydrolase 10 (cellulase F) family.

It catalyses the reaction Endohydrolysis of (1-&gt;4)-beta-D-glucosidic linkages in cellulose, lichenin and cereal beta-D-glucans.. The catalysed reaction is Endohydrolysis of (1-&gt;4)-beta-D-xylosidic linkages in xylans.. Its pathway is glycan degradation; xylan degradation. Active toward xylan, carboxymethylcellulose, P-nitrophenyl-beta-D-xylopyranoside and P-nitrophenyl-beta-D-cellobioside. In Thermoclostridium stercorarium (Clostridium stercorarium), this protein is Thermostable celloxylanase (xynB).